We begin with the raw amino-acid sequence, 125 residues long: Salivary protein 15 Ipac-1 (125 aa).

The first 15 residues, 1–15, serve as a signal peptide directing secretion; that stretch reads MKVVCIILLFGIAAA. Residues N82 and N94 are each glycosylated (N-linked (GlcNAc...) asparagine). The CD4-binding stretch occupies residues 106-125; that stretch reads GPSGQTCADKSKCVGHIPGC.

This sequence belongs to the salp15 family. As to quaternary structure, interacts with host CD4. Interacts with host DC-SIGN (CD209). Interacts with Borrelia outer surface protein C (OspC). In terms of tissue distribution, expressed in salivary glands.

Its subcellular location is the secreted. Functionally, salivary tick protein that downregulates host immune system by binding to both dendritic cells, and CD4(+) T cells. Specifically binds to the CD4 coreceptor on T cells. This interaction prevents the activation of the Src kinase, Lck, and its downstream substrate Zap-70, and results in deficient activation of PLCgamma1, the repression of calcium fluxes triggered by T-cell antigen receptor (TCR) ligation, and a subsequent reduction in interleukin-2 production. This salivary protein also binds to DC-SIGN (CD209) on dendritic cells (DC) and activates the Raf-1 kinase/MEK signaling pathway that results in down-regulating expression of pro-inflammatory cytokines. Furthermore, it inhibits T cell proliferation induced by DCs. It also inhibits in vitro keratinocyte inflammation induced by Borrelia burgdorferi or by the major outer surface protein (OspC) of Borrelia. In addition, it downregulates chemokines and monocyte chemoattractant protein 1, as well as several antimicrobial peptides such as defensins, cathelicidin, psoriasin, and RNase 7. Apart from its immunomodulatory activities, it is also associated with protection of Borrelia spirochetes from antibody-mediated killing through its binding to OspC. In vivo, tests on different immune disease animal models show promising therapeutic results, e.g., in inhibiting HIV infection, experimental autoimmune encephalomyelitis, transplantation rejection, and asthma. The protein is Salivary protein 15 Ipac-1 of Ixodes pacificus (Western black-legged tick).